The following is a 346-amino-acid chain: Senescence-specific cysteine protease SAG12 (346 aa).

An N-terminal signal peptide occupies residues 1–25 (MALKHMQIFLFVAIFSSFCFSITLS). Residue N124 is glycosylated (N-linked (GlcNAc...) asparagine). Intrachain disulfides connect C151–C192, C185–C225, and C283–C335. Residue C154 is part of the active site. Residue H289 is part of the active site. The N-linked (GlcNAc...) asparagine glycan is linked to N301. N310 is a catalytic residue.

Belongs to the peptidase C1 family. As to expression, found in senescent leaves, especially in senescence-associated vacuoles- (SAVs) containing cells (e.g. mesophyll and guard cells), and in senescencing ovules of unfertilised pistils.

The protein resides in the vacuole. In terms of biological role, cysteine protease that may have a developmental senescence specific cell death function during apoptosis, heavy metal detoxification, and hypersensitive response. In Arabidopsis thaliana (Mouse-ear cress), this protein is Senescence-specific cysteine protease SAG12.